A 106-amino-acid chain; its full sequence is Ribonuclease P protein component 4 (106 aa).

Zn(2+) contacts are provided by cysteine 57, cysteine 60, cysteine 83, and cysteine 86.

This sequence belongs to the eukaryotic/archaeal RNase P protein component 4 family. In terms of assembly, consists of a catalytic RNA component and at least 4-5 protein subunits. Requires Zn(2+) as cofactor.

The protein resides in the cytoplasm. It catalyses the reaction Endonucleolytic cleavage of RNA, removing 5'-extranucleotides from tRNA precursor.. Part of ribonuclease P, a protein complex that generates mature tRNA molecules by cleaving their 5'-ends. The sequence is that of Ribonuclease P protein component 4 from Saccharolobus solfataricus (strain ATCC 35092 / DSM 1617 / JCM 11322 / P2) (Sulfolobus solfataricus).